The following is a 181-amino-acid chain: UPF0340 protein OB2986 (181 aa).

Belongs to the UPF0340 family.

The sequence is that of UPF0340 protein OB2986 from Oceanobacillus iheyensis (strain DSM 14371 / CIP 107618 / JCM 11309 / KCTC 3954 / HTE831).